The chain runs to 606 residues: Sulfite reductase [NADPH] flavoprotein alpha-component (606 aa).

The Flavodoxin-like domain occupies 68–206; the sequence is ITILSASQTG…AAEAWRKEVT (139 aa). Residues 74–79, 121–124, and 157–166 each bind FMN; these read SQTGNA, STQG, and LGDITYEHFA. Positions 240-454 constitute an FAD-binding FR-type domain; it reads ESPLTATLSV…VEHNDNFRLP (215 aa). FAD is bound by residues Thr-328, Gln-362, 392–395, 410–412, Tyr-416, and 425–428; these read RLYS, TVG, and GGAS. Residues 525–526, 531–535, and Asp-568 contribute to the NADP(+) site; these read SR and KVYVQ. An FAD-binding site is contributed by Tyr-606.

It belongs to the NADPH-dependent sulphite reductase flavoprotein subunit CysJ family. In the N-terminal section; belongs to the flavodoxin family. This sequence in the C-terminal section; belongs to the flavoprotein pyridine nucleotide cytochrome reductase family. As to quaternary structure, alpha(8)-beta(8). The alpha component is a flavoprotein, the beta component is a hemoprotein. The cofactor is FAD. FMN is required as a cofactor.

It catalyses the reaction hydrogen sulfide + 3 NADP(+) + 3 H2O = sulfite + 3 NADPH + 4 H(+). The protein operates within sulfur metabolism; hydrogen sulfide biosynthesis; hydrogen sulfide from sulfite (NADPH route): step 1/1. Its function is as follows. Component of the sulfite reductase complex that catalyzes the 6-electron reduction of sulfite to sulfide. This is one of several activities required for the biosynthesis of L-cysteine from sulfate. The flavoprotein component catalyzes the electron flow from NADPH -&gt; FAD -&gt; FMN to the hemoprotein component. The sequence is that of Sulfite reductase [NADPH] flavoprotein alpha-component from Zymomonas mobilis subsp. mobilis (strain ATCC 31821 / ZM4 / CP4).